The primary structure comprises 665 residues: MYRRSYVFQTRKEQYEHADEASRAAEPERPADEGWAGATSLAALQGLGERVAAHVQRARALEQRHAGLRRQLDAFQRLGELAGPEDALARQVESNRQRVRDLEAERARLERQGTEAQRALDEFRSKYENECECQLLLKEMLERLNKEADEALLHNLRLQLEAQFLQDDISAAKDRHKKNLLEVQTYISILQQIIHTTPPASIVTSGMREEKLLTEREVAALRSQLEEGREVLSHLQAQRVELQAQTTTLEQAIKSAHECYDDEIQLYNEQIETLRKEIEETERVLEKSSYDCRQLAVAQQTLKNELDRYHRIIEIEGNRLTSAFIETPIPLFTQSHGVSLSTGSGGKDLTRALQDITAAKPRQKALPKNVPRRKEIITKDKTNGALEDAPLKGLEDTKLVQVVLKEESESKFESESKEVSPLTQEGAPEDVPDGGQISKGFGKLYRKVKEKVRSPKEPETPTELYTKERHVLVTGDANYVDPRFYVSSITAKGGVAVSVAEDSVLYDGQVEPSPESPKPPLENGQVGLQEKEDGQPIDQQPIDKEIEPDGAELEGPEEKREGEERDEESRRPCAMVTPGAEEPSIPEPPKPAADQDGAEVLGTRSRSLPEKGPPKALAYKTVEVVESIEKISTESIQTYEETAVIVETMIGKTKSDKKKSGEKSS.

The segment at 1–40 (MYRRSYVFQTRKEQYEHADEASRAAEPERPADEGWAGATS) is head. At Ser5 the chain carries Phosphoserine. The IF rod domain maps to 40–320 (SLAALQGLGE…RIIEIEGNRL (281 aa)). A coil 1A region spans residues 41–75 (LAALQGLGERVAAHVQRARALEQRHAGLRRQLDAF). At Ala42 the chain carries N-acetylalanine. The interval 76 to 84 (QRLGELAGP) is linker 1. Residues 85–184 (EDALARQVES…RHKKNLLEVQ (100 aa)) are coil 1B. A linker 12 region spans residues 185–201 (TYISILQQIIHTTPPAS). The coil 2 stretch occupies residues 202 to 320 (IVTSGMREEK…RIIEIEGNRL (119 aa)). The segment at 321 to 665 (TSAFIETPIP…DKKKSGEKSS (345 aa)) is tail. A phosphoserine mark is found at Ser341 and Ser420. Disordered stretches follow at residues 410–439 (SKFE…QISK) and 506–614 (YDGQ…KGPP). Residue Gly434 is the site of N-myristoyl glycine attachment. The residue at position 513 (Ser513) is a Phosphoserine. Over residues 556–571 (PEEKREGEERDEESRR) the composition is skewed to basic and acidic residues. The residue at position 665 (Ser665) is a Phosphoserine.

This sequence belongs to the intermediate filament family. Part of a complex required for lens intermediate filament formation composed of BFSP1, BFSP2 and CRYAA. Identified in a complex that contains VIM, EZR, AHNAK, BFSP1, BFSP2, ANK2, PLEC, PRX and spectrin. Found in a complex composed of PPL (via C-terminal linker domain), BFSP1 and BFSP2 in the retinal lens. Within the complex interacts with BFSP2. Interacts (via C-terminus) with MIP (via C-terminus) in aged lens fiber cells. Proteolytically cleaved during lens cell fiber differentiation with increased fragmentation as fiber cell age increases. In terms of processing, myristoylated at Gly-434 following proteolytic cleavage at Asp-433. Post-translationally, acetylated at Ala-42 following proteolytic cleavage at Leu-41. In terms of tissue distribution, expressed in the cortex and nucleus of the retina lens (at protein level).

The protein resides in the cell membrane. It localises to the cytoplasm. Its subcellular location is the cytoskeleton. The protein localises to the cell cortex. In terms of biological role, required for the correct formation of lens intermediate filaments as part of a complex composed of BFSP1, BFSP2 and CRYAA. Involved in altering the calcium regulation of MIP water permeability. In Homo sapiens (Human), this protein is Filensin (BFSP1).